A 453-amino-acid chain; its full sequence is Allantoinase (453 aa).

The Zn(2+) site is built by His59, His61, Lys146, His186, His242, and Asp315. At Lys146 the chain carries N6-carboxylysine.

The protein belongs to the metallo-dependent hydrolases superfamily. Allantoinase family. Homotetramer. Requires Zn(2+) as cofactor. Carboxylation allows a single lysine to coordinate two zinc ions.

The catalysed reaction is (S)-allantoin + H2O = allantoate + H(+). It functions in the pathway nitrogen metabolism; (S)-allantoin degradation; allantoate from (S)-allantoin: step 1/1. Its function is as follows. Catalyzes the conversion of allantoin (5-ureidohydantoin) to allantoic acid by hydrolytic cleavage of the five-member hydantoin ring. This is Allantoinase from Escherichia coli (strain K12 / MC4100 / BW2952).